The sequence spans 507 residues: Sugar transport protein 6 (507 aa).

Topologically, residues 1-20 (MAVVVSNANAPAFEAKMTVY) are cytoplasmic. The next 12 membrane-spanning stretches (helical) occupy residues 21–41 (VFIC…DIGI), 78–98 (FLQL…FVAS), 115–135 (IFFL…MLII), 138–158 (LFLG…LSEI), 165–185 (GGLN…ANIV), 199–219 (IALG…LLII), 280–300 (FIIG…AIMF), 318–338 (LSAV…IYLV), 345–365 (FLLL…GIIL), 381–401 (LVVV…WGPL), 418–438 (GFAV…QAFL), and 447–467 (GIFF…FFFI). The Cytoplasmic segment spans residues 468–507 (PETKGIAIDDMRESVWKPHWFWKRYMLPEDDHHDIEKRNA).

This sequence belongs to the major facilitator superfamily. Sugar transporter (TC 2.A.1.1) family. In terms of tissue distribution, pollen specific.

The protein localises to the membrane. Its activity is regulated as follows. Inhibited by uncouplers such as 2,4-dinitrophenol and carbonyl cyanide-m-chlorophenyl-hydrazone. In terms of biological role, mediates an active uptake of hexoses, probably by sugar/hydrogen symport. Can transport glucose, 3-O-methylglucose, mannose, fructose and galactose, and, to a lower extent, xylose and ribulose. This Arabidopsis thaliana (Mouse-ear cress) protein is Sugar transport protein 6 (STP6).